The chain runs to 363 residues: Osmoprotective compounds uptake ATP-binding protein GgtA (363 aa).

Residues 4-234 (VSFEQVTKQF…PANLFVAGFI (231 aa)) enclose the ABC transporter domain. 36–43 (GPSGCGKT) provides a ligand contact to ATP.

This sequence belongs to the ABC transporter superfamily. The complex is composed of two ATP-binding proteins (GgtA), two transmembrane proteins (GgtC and GgtD) and a solute-binding protein (GgtB).

The protein localises to the cell membrane. Functionally, part of the ABC transporter complex GgtABCD involved in the uptake of the osmoprotective compounds glucosylglycerol (GG), sucrose and trehalose. Responsible for energy coupling to the transport system. This Synechocystis sp. (strain ATCC 27184 / PCC 6803 / Kazusa) protein is Osmoprotective compounds uptake ATP-binding protein GgtA.